A 431-amino-acid polypeptide reads, in one-letter code: MESKFKQLSDTEQELEISFSPDEFQPELDKQYKLAQAKAHLKGFRKGKAPLQMIKKMLGRDIQYQVVEELAGKNFESVAKENDLKLVGQAKIRHYELAENEKLSIYLIYEVHPAFELKPFNEYEFKKAEYQVSDETVEKELKKLLQSKGNMVAVEGAAAPTDIVIGDVQKLDADGTAIVGERQENQSFRLEYMKDDSPFFTALNGVNKGEERRVEVEVKEEDVPEENKKQTFLISVKEIKRMELPELTDELVKELSRGKNETVQDFRDELRKQIEAYFTNKSEEDLMESVAQKFLEENVFTAPSSLIKMYEDMLLDNAKRQIGGAFPPGFDETYYRAEIRPNAEKHARWMLIRNKIAELNGIEVSDDDIKALAEKEAKLTGAEATEEFVNTYFSEQYKPYVIDTLLRDKIYEFIKANTKIEVESKLPEAAV.

In terms of domain architecture, PPIase FKBP-type spans 161–245 (TDIVIGDVQK…VKEIKRMELP (85 aa)).

This sequence belongs to the FKBP-type PPIase family. Tig subfamily.

The protein localises to the cytoplasm. The enzyme catalyses [protein]-peptidylproline (omega=180) = [protein]-peptidylproline (omega=0). Functionally, involved in protein export. Acts as a chaperone by maintaining the newly synthesized protein in an open conformation. Functions as a peptidyl-prolyl cis-trans isomerase. The sequence is that of Trigger factor from Chloroherpeton thalassium (strain ATCC 35110 / GB-78).